Here is an 89-residue protein sequence, read N- to C-terminus: UPF0297 protein SEQ_2150 (89 aa).

This sequence belongs to the UPF0297 family.

The chain is UPF0297 protein SEQ_2150 from Streptococcus equi subsp. equi (strain 4047).